The sequence spans 1960 residues: Exophilin-5 (1960 aa).

One can recognise a RabBD domain in the interval 7 to 63 (GFDFSFLNEEEARKILQVLERNEELRRAEKDRISKLQKTKRDIRWLQGATGEWFEEI). 3 stretches are compositionally biased toward polar residues: residues 325-334 (ASPATGSFTA), 342-366 (DTQN…LSSI), and 635-645 (SQSSSFPDSTA). Disordered stretches follow at residues 325 to 366 (ASPA…LSSI), 616 to 645 (TPAS…DSTA), 672 to 720 (HSTD…TGLP), 734 to 835 (DFQN…SSNT), and 910 to 976 (FSRS…KGRV). Residues 673–682 (STDSLSLTDT) are compositionally biased toward low complexity. The segment covering 692–707 (NSEKDMDVSVSKDEQL) has biased composition (basic and acidic residues). S799 and S802 each carry phosphoserine. Polar residues-rich tracts occupy residues 808–835 (ESGT…SSNT) and 910–920 (FSRSLSDQDPG). Basic and acidic residues predominate over residues 921–932 (QEQREEKDKATK). Positions 933 to 945 (SQDNQLAVNSTDN) are enriched in polar residues. A Phosphoserine modification is found at S1027. Residues 1035–1095 (QESKGTVASV…PKATKKMTDM (61 aa)) form a disordered region. Polar residues predominate over residues 1062-1074 (GKSTSDKPSSPES). 2 positions are modified to phosphoserine: S1083 and S1117. Disordered stretches follow at residues 1291 to 1375 (AQVQ…LSRE), 1389 to 1493 (PLLH…DSES), and 1510 to 1759 (EAQP…EPHL). Residues 1318 to 1336 (PESKDVSQLPDRETSKSTL) are compositionally biased toward basic and acidic residues. The segment covering 1356–1365 (KEISPSNVSK) has biased composition (polar residues). The segment covering 1392-1403 (HQEKGAGKEHTK) has biased composition (basic and acidic residues). 2 stretches are compositionally biased toward polar residues: residues 1470–1493 (RETS…DSES) and 1520–1533 (SEAS…TNTA). S1493 carries the phosphoserine modification. Basic and acidic residues-rich tracts occupy residues 1534-1546 (EMRK…HMLT) and 1561-1571 (TNTDETKDRYS). Residues 1572–1586 (GKHRLAAISKASKRI) show a composition bias toward basic residues. Over residues 1637–1657 (ESSQMNVDKSETLLQETTVSS) the composition is skewed to polar residues. Phosphoserine is present on residues S1724, S1739, S1789, and S1819. Residues 1732 to 1741 (TQKSTINSHC) are compositionally biased toward polar residues. 2 disordered regions span residues 1828–1847 (ESES…STSS) and 1906–1960 (VNSP…ESEL). Positions 1939–1950 (WDTDTTTDDEYY) are enriched in acidic residues. Positions 1951-1960 (LDEKDKESEL) are enriched in basic and acidic residues.

Interacts with RAB27A.

May act as Rab effector protein and play a role in vesicle trafficking. The chain is Exophilin-5 from Mus musculus (Mouse).